The sequence spans 127 residues: Protein chibby homolog 1 (127 aa).

The interval 1-25 is disordered; that stretch reads MPLFGSIFSPKKTPPRKSASLSNLH. Residues Ser9 and Ser20 each carry the phosphoserine modification. Residues 60–112 are minimal region for the interaction with PKD2; that stretch reads VADSVISGGVDRRETQRLRKRNQQLEEENNLLRLKVDILLDMLSETTAESHLK. A coiled-coil region spans residues 68-110; the sequence is GVDRRETQRLRKRNQQLEEENNLLRLKVDILLDMLSETTAESH. The leucine-zipper; mediates homodimerization stretch occupies residues 77–98; sequence LRKRNQQLEEENNLLRLKVDIL.

It belongs to the chibby family. As to quaternary structure, homodimer. Homodimerization is essential for nuclear localization and interaction with KPNA4 but is dispensable for interaction with CTNNB1. Interacts with polycystin-2/PKD2 and GM130. Interacts with the C-terminal region of CTNNB1. Interacts (C-terminus) with TCIM (C-terminus), TCIM competes with CTNNB1 for the interaction with CBY1. Interacts with FAM92A; this interaction facilitates targeting of FAM92A to cilium basal body. Interacts with CIBAR2. Interacts with KPNA4.

The protein resides in the nucleus speckle. The protein localises to the cytoplasm. It localises to the cytoskeleton. It is found in the cilium basal body. Its subcellular location is the microtubule organizing center. The protein resides in the centrosome. The protein localises to the centriole. It localises to the golgi apparatus. It is found in the trans-Golgi network. Its subcellular location is the cell projection. The protein resides in the cilium. The protein localises to the flagellum. It localises to the nucleus. Its function is as follows. Inhibits the Wnt/Wingless pathway by binding to CTNNB1/beta-catenin and inhibiting beta-catenin-mediated transcriptional activation through competition with TCF/LEF transcription factors. Has also been shown to play a role in regulating the intracellular trafficking of polycystin-2/PKD2 and possibly of other intracellular proteins. Promotes adipocyte and cardiomyocyte differentiation. The chain is Protein chibby homolog 1 (Cby1) from Rattus norvegicus (Rat).